A 452-amino-acid polypeptide reads, in one-letter code: Phosphoglucosamine mutase (452 aa).

The active-site Phosphoserine intermediate is the serine 108. Residues serine 108, aspartate 247, aspartate 249, and aspartate 251 each coordinate Mg(2+). Serine 108 carries the phosphoserine modification.

It belongs to the phosphohexose mutase family. Mg(2+) serves as cofactor. Activated by phosphorylation.

The catalysed reaction is alpha-D-glucosamine 1-phosphate = D-glucosamine 6-phosphate. Functionally, catalyzes the conversion of glucosamine-6-phosphate to glucosamine-1-phosphate. In Burkholderia mallei (strain NCTC 10247), this protein is Phosphoglucosamine mutase.